We begin with the raw amino-acid sequence, 142 residues long: ER-derived vesicles protein ERV15 (142 aa).

Topologically, residues 1 to 7 (MSGTGLS) are cytoplasmic. The helical transmembrane segment at 8-28 (LFVTGLILNCLNSICQIYFTI) threads the bilayer. Residues 29 to 55 (LYGDLEADYINSIELCKRVNRLSVPEA) lie on the Extracellular side of the membrane. Residues 56 to 76 (ILQAFISALFLFNGYWFVFLL) traverse the membrane as a helical segment. Residues 77–114 (NVPVLAYNASKVYKKTHLLDATDIFRKLGRCKIECFLK) lie on the Cytoplasmic side of the membrane. A helical membrane pass occupies residues 115–135 (LGFYLLIFFFYFYRMVTALLE). The Extracellular segment spans residues 136 to 142 (NDANLIS).

The protein belongs to the cornichon family.

It localises to the membrane. In Saccharomyces cerevisiae (strain ATCC 204508 / S288c) (Baker's yeast), this protein is ER-derived vesicles protein ERV15 (ERV15).